Consider the following 304-residue polypeptide: Ribosome-inactivating protein 9 (304 aa).

The active site involves Glu-208.

The protein belongs to the ribosome-inactivating protein family. Type 1 RIP subfamily. In terms of assembly, monomer. In terms of tissue distribution, accumulates to high levels in seeds.

Its subcellular location is the cytoplasm. It carries out the reaction Endohydrolysis of the N-glycosidic bond at one specific adenosine on the 28S rRNA.. Possesses features of some constitutive defense agent. The coordinate Opaque-2-controlled synthesis of this protein and the major seed storage proteins (zeins) may provide the germinating seedling with both nutritional benefits and protection against pathogen invasion of the surrounding endosperm. The protein is Ribosome-inactivating protein 9 (CRIP9) of Zea mays (Maize).